The following is a 123-amino-acid chain: Putative membrane protein insertion efficiency factor (123 aa).

Belongs to the UPF0161 family.

It is found in the cell inner membrane. Could be involved in insertion of integral membrane proteins into the membrane. This chain is Putative membrane protein insertion efficiency factor, found in Beijerinckia indica subsp. indica (strain ATCC 9039 / DSM 1715 / NCIMB 8712).